Consider the following 121-residue polypeptide: Flagellar protein FliT (121 aa).

Positions 1-50 (MNNAPHLYFAWQQLVEKSQLMLRLATEEQWDELIASEMAYVNAVQEIAHL) are required for homodimerization. Positions 60-98 (MQEQLRPMLHLILDNESKVKQLLQIRMDELAKLVGQSSV) are fliD binding.

This sequence belongs to the FliT family. Homodimer. Interacts with FliD and FlhC.

Its subcellular location is the cytoplasm. It localises to the cytosol. Its function is as follows. Dual-function protein that regulates the transcription of class 2 flagellar operons and that also acts as an export chaperone for the filament-capping protein FliD. As a transcriptional regulator, acts as an anti-FlhDC factor; it directly binds FlhC, thus inhibiting the binding of the FlhC/FlhD complex to class 2 promoters, resulting in decreased expression of class 2 flagellar operons. As a chaperone, effects FliD transition to the membrane by preventing its premature polymerization, and by directing it to the export apparatus. The protein is Flagellar protein FliT of Shigella flexneri serotype 5b (strain 8401).